Reading from the N-terminus, the 212-residue chain is MKASLADARLYLCVDSRRRQGDLPAFLDAVLGAGVDVVQLREKGLEAKEELRLLDVFAEACRRHGALLAVNDRADIAYAARSDVLHLGQDDLPVGIARSIVGDDVVIGLSTHSVEQVQAAVSDPAVDYFCVGPCWPTPTKPGRPAAGLDVVRYAAQAAGDRPWFAIGGINLQNLDEVLEAGARRVVVVRAIADAPDPAEAAAEFAARLAAAA.

Residues glutamine 39–lysine 43 and asparagine 71 each bind 4-amino-2-methyl-5-(diphosphooxymethyl)pyrimidine. Residues aspartate 72 and aspartate 91 each contribute to the Mg(2+) site. Serine 110 is a 4-amino-2-methyl-5-(diphosphooxymethyl)pyrimidine binding site. A 2-[(2R,5Z)-2-carboxy-4-methylthiazol-5(2H)-ylidene]ethyl phosphate-binding site is contributed by threonine 137–threonine 139. 4-amino-2-methyl-5-(diphosphooxymethyl)pyrimidine is bound at residue lysine 140. Residue glycine 168 coordinates 2-[(2R,5Z)-2-carboxy-4-methylthiazol-5(2H)-ylidene]ethyl phosphate.

It belongs to the thiamine-phosphate synthase family. It depends on Mg(2+) as a cofactor.

The enzyme catalyses 2-[(2R,5Z)-2-carboxy-4-methylthiazol-5(2H)-ylidene]ethyl phosphate + 4-amino-2-methyl-5-(diphosphooxymethyl)pyrimidine + 2 H(+) = thiamine phosphate + CO2 + diphosphate. It carries out the reaction 2-(2-carboxy-4-methylthiazol-5-yl)ethyl phosphate + 4-amino-2-methyl-5-(diphosphooxymethyl)pyrimidine + 2 H(+) = thiamine phosphate + CO2 + diphosphate. The catalysed reaction is 4-methyl-5-(2-phosphooxyethyl)-thiazole + 4-amino-2-methyl-5-(diphosphooxymethyl)pyrimidine + H(+) = thiamine phosphate + diphosphate. Its pathway is cofactor biosynthesis; thiamine diphosphate biosynthesis; thiamine phosphate from 4-amino-2-methyl-5-diphosphomethylpyrimidine and 4-methyl-5-(2-phosphoethyl)-thiazole: step 1/1. Its function is as follows. Condenses 4-methyl-5-(beta-hydroxyethyl)thiazole monophosphate (THZ-P) and 2-methyl-4-amino-5-hydroxymethyl pyrimidine pyrophosphate (HMP-PP) to form thiamine monophosphate (TMP). The chain is Thiamine-phosphate synthase from Acidothermus cellulolyticus (strain ATCC 43068 / DSM 8971 / 11B).